A 241-amino-acid polypeptide reads, in one-letter code: Leucyl/phenylalanyl-tRNA--protein transferase (241 aa).

It belongs to the L/F-transferase family.

It is found in the cytoplasm. The catalysed reaction is N-terminal L-lysyl-[protein] + L-leucyl-tRNA(Leu) = N-terminal L-leucyl-L-lysyl-[protein] + tRNA(Leu) + H(+). The enzyme catalyses N-terminal L-arginyl-[protein] + L-leucyl-tRNA(Leu) = N-terminal L-leucyl-L-arginyl-[protein] + tRNA(Leu) + H(+). It carries out the reaction L-phenylalanyl-tRNA(Phe) + an N-terminal L-alpha-aminoacyl-[protein] = an N-terminal L-phenylalanyl-L-alpha-aminoacyl-[protein] + tRNA(Phe). Functionally, functions in the N-end rule pathway of protein degradation where it conjugates Leu, Phe and, less efficiently, Met from aminoacyl-tRNAs to the N-termini of proteins containing an N-terminal arginine or lysine. The protein is Leucyl/phenylalanyl-tRNA--protein transferase of Neisseria meningitidis serogroup C (strain 053442).